The following is a 418-amino-acid chain: Histidine--tRNA ligase (418 aa).

This sequence belongs to the class-II aminoacyl-tRNA synthetase family. Homodimer.

Its subcellular location is the cytoplasm. The enzyme catalyses tRNA(His) + L-histidine + ATP = L-histidyl-tRNA(His) + AMP + diphosphate + H(+). The protein is Histidine--tRNA ligase of Thermosipho africanus (strain TCF52B).